A 254-amino-acid polypeptide reads, in one-letter code: Nickel import ATP-binding protein NikD (254 aa).

The ABC transporter domain maps to 2–241; that stretch reads PQQIELRNIT…PKHTVTRSLV (240 aa). Position 36-43 (36-43) interacts with ATP; it reads GGSGSGKS.

The protein belongs to the ABC transporter superfamily. Nickel importer (TC 3.A.1.5.3) family. In terms of assembly, the complex is composed of two ATP-binding proteins (NikD and NikE), two transmembrane proteins (NikB and NikC) and a solute-binding protein (NikA).

The protein localises to the cell inner membrane. It catalyses the reaction Ni(2+)(out) + ATP + H2O = Ni(2+)(in) + ADP + phosphate + H(+). Part of the ABC transporter complex NikABCDE involved in nickel import. Responsible for energy coupling to the transport system. In Shigella flexneri, this protein is Nickel import ATP-binding protein NikD.